The primary structure comprises 197 residues: FMN-dependent NADH:quinone oxidoreductase (197 aa).

FMN is bound by residues Ser10, 16–18, and 96–99; these read SKS and MYNF.

This sequence belongs to the azoreductase type 1 family. In terms of assembly, homodimer. The cofactor is FMN.

It carries out the reaction 2 a quinone + NADH + H(+) = 2 a 1,4-benzosemiquinone + NAD(+). The catalysed reaction is N,N-dimethyl-1,4-phenylenediamine + anthranilate + 2 NAD(+) = 2-(4-dimethylaminophenyl)diazenylbenzoate + 2 NADH + 2 H(+). In terms of biological role, quinone reductase that provides resistance to thiol-specific stress caused by electrophilic quinones. Also exhibits azoreductase activity. Catalyzes the reductive cleavage of the azo bond in aromatic azo compounds to the corresponding amines. This chain is FMN-dependent NADH:quinone oxidoreductase, found in Marinomonas sp. (strain MWYL1).